A 269-amino-acid chain; its full sequence is MFSDKMILIAGPCVIEEEETTLEIASRIQELVTPYADRIHWIFKSSYDKANRSSINSYRGPGLNEGLRILSKVKDTLGVEILTDVHSPEEARAAAKVCDILQIPAFLCRQTDLLVAAAETNAVINIKKGQFLSPWDMQGPVDKVLSTGNNKIILTERGCSFGYNNLVSDMRSIPVLSGMGFPVVFDGTHSVQLPGGLKTHSGGQTEFIPTLTRAALAAGAHGLFIETHANPAIAKSDAASMLSLKTFEALLPLWDQLYTCVRSFEMASV.

It belongs to the KdsA family.

It is found in the cytoplasm. The enzyme catalyses D-arabinose 5-phosphate + phosphoenolpyruvate + H2O = 3-deoxy-alpha-D-manno-2-octulosonate-8-phosphate + phosphate. It participates in carbohydrate biosynthesis; 3-deoxy-D-manno-octulosonate biosynthesis; 3-deoxy-D-manno-octulosonate from D-ribulose 5-phosphate: step 2/3. Its pathway is bacterial outer membrane biogenesis; lipopolysaccharide biosynthesis. In Chlamydia caviae (strain ATCC VR-813 / DSM 19441 / 03DC25 / GPIC) (Chlamydophila caviae), this protein is 2-dehydro-3-deoxyphosphooctonate aldolase.